A 176-amino-acid chain; its full sequence is ATP synthase subunit b (176 aa).

Residues 26 to 45 (VINLAIIIGVLVYFGRGLLG) form a helical membrane-spanning segment.

Belongs to the ATPase B chain family. As to quaternary structure, F-type ATPases have 2 components, F(1) - the catalytic core - and F(0) - the membrane proton channel. F(1) has five subunits: alpha(3), beta(3), gamma(1), delta(1), epsilon(1). F(0) has four main subunits: a(1), b(1), b'(1) and c(10-14). The alpha and beta chains form an alternating ring which encloses part of the gamma chain. F(1) is attached to F(0) by a central stalk formed by the gamma and epsilon chains, while a peripheral stalk is formed by the delta, b and b' chains.

Its subcellular location is the cellular thylakoid membrane. F(1)F(0) ATP synthase produces ATP from ADP in the presence of a proton or sodium gradient. F-type ATPases consist of two structural domains, F(1) containing the extramembraneous catalytic core and F(0) containing the membrane proton channel, linked together by a central stalk and a peripheral stalk. During catalysis, ATP synthesis in the catalytic domain of F(1) is coupled via a rotary mechanism of the central stalk subunits to proton translocation. Its function is as follows. Component of the F(0) channel, it forms part of the peripheral stalk, linking F(1) to F(0). This Synechococcus sp. (strain PCC 6716) protein is ATP synthase subunit b.